The chain runs to 268 residues: 3-deoxy-manno-octulosonate cytidylyltransferase (268 aa).

Belongs to the KdsB family.

Its subcellular location is the cytoplasm. It catalyses the reaction 3-deoxy-alpha-D-manno-oct-2-ulosonate + CTP = CMP-3-deoxy-beta-D-manno-octulosonate + diphosphate. It functions in the pathway nucleotide-sugar biosynthesis; CMP-3-deoxy-D-manno-octulosonate biosynthesis; CMP-3-deoxy-D-manno-octulosonate from 3-deoxy-D-manno-octulosonate and CTP: step 1/1. Its pathway is bacterial outer membrane biogenesis; lipopolysaccharide biosynthesis. In terms of biological role, activates KDO (a required 8-carbon sugar) for incorporation into bacterial lipopolysaccharide in Gram-negative bacteria. This chain is 3-deoxy-manno-octulosonate cytidylyltransferase, found in Ralstonia pickettii (strain 12J).